A 300-amino-acid chain; its full sequence is Forkhead transcription factor fkh-9 (300 aa).

Positions 66-161 form a DNA-binding region, fork-head; sequence RPSLSYKDLI…DKQTLRRRNR (96 aa). The disordered stretch occupies residues 153 to 208; sequence KQTLRRRNRQQPRALAKKSDAGRTLSRDDRGSSGSGETSPSPSQPSISPPNENPMP. Over residues 169–183 the composition is skewed to basic and acidic residues; that stretch reads KKSDAGRTLSRDDRG. Over residues 187 to 198 the composition is skewed to low complexity; sequence SGETSPSPSQPS.

In terms of tissue distribution, expressed in mechanosensory neurons.

It is found in the nucleus. Transcription factor. Binds to the regulatory elements of genes that contain the sequence motif 5'-TTGTTTCT-3'. Involved in regulating intestinal transcription of vitellogenin vit-2, acting in concert with transcription factors elt-2, mab-3 and daf-16, and also the TGF-beta/Sma/Mab pathway. Functions downstream of the insulin/IGF-1-like signaling (IIS) mediated pathway, in regeneration of axons after injury and in short-term memory, perhaps acting in neurons, and in modulation of longevity, perhaps acting non-neuronally. Plays a role in the modulation of endoplasmic reticulum (ER) homeostasis during chemical and pathogen stress, including exposure to the Gram-negative bacterium P.aeruginosa. The sequence is that of Forkhead transcription factor fkh-9 from Caenorhabditis elegans.